Consider the following 279-residue polypeptide: Tryptophan synthase alpha chain (279 aa).

Catalysis depends on proton acceptor residues Glu-50 and Asp-61.

It belongs to the TrpA family. Tetramer of two alpha and two beta chains.

The catalysed reaction is (1S,2R)-1-C-(indol-3-yl)glycerol 3-phosphate + L-serine = D-glyceraldehyde 3-phosphate + L-tryptophan + H2O. Its pathway is amino-acid biosynthesis; L-tryptophan biosynthesis; L-tryptophan from chorismate: step 5/5. In terms of biological role, the alpha subunit is responsible for the aldol cleavage of indoleglycerol phosphate to indole and glyceraldehyde 3-phosphate. This is Tryptophan synthase alpha chain from Sinorhizobium fredii (strain NBRC 101917 / NGR234).